Consider the following 485-residue polypeptide: MSGQKGEIVVYTKELETTPELLPNHEVFKIRIGQKLFEISGATLNSDAPNFFTQFFNTHDKNTILFVDRSEDVFIIIYRHLQGYFPDIKNEVQFTCLFADALYFQLPKLVKLIKEYDYHFTNIGGVPFKVPKSLFHEEGNRLNYFETISRISYEEIEKWESNKKPGFPPLLPPSYIARSPEFFRDILSLLGGSKLELSEERTASLIKECRYYRLNRLEQELVRAKIIYNPLTNCQEVCIALDSVSKKGVTIERLTSLHTGNQSLAVSSCLNGTEGEKAATGFHKTETDSGNNDEYEPPTKKVKHCIERHWSMLKYQRPYIDTVSHDLIFQLHSNQCKIIFNKKNKTVHVDLSREAAVLFENKFSDVLLENPDFKIDLSEYKVKLRDSQMQVESHLIIPACVSICDLTVNGAKCCNIFSLVNDSKCKGRVLDCTNLKVLNCVHGLKLHLSKSMWKLGTNNGRIILVAVKAETFSGTKEYCKMIDFL.

Residues 26-121 form the BTB domain; the sequence is EVFKIRIGQK…LIKEYDYHFT (96 aa).

The protein resides in the nucleus. The sequence is that of BTB/POZ domain-containing protein YLR108C from Saccharomyces cerevisiae (strain ATCC 204508 / S288c) (Baker's yeast).